A 551-amino-acid polypeptide reads, in one-letter code: Putative transport protein CGSHiEE_03135 (551 aa).

The next 5 helical transmembrane spans lie at 4 to 24 (IAIT…IGHW), 28 to 48 (GVGL…HFTD), 65 to 85 (FGLI…FFSS), 95 to 115 (AFAI…HKIA), and 157 to 177 (VSYA…MWLI). 2 RCK C-terminal domains span residues 191 to 275 (RFNA…IIGY) and 277 to 360 (VDAP…VIGN). 6 consecutive transmembrane segments (helical) span residues 370–390 (MLPV…PFYI), 402–424 (AGGP…LYWF), 438–458 (IVLF…DTLV), 463–483 (LEWM…AGTI), 492–512 (YLTI…LAFA), and 529–549 (VYPL…VLLW).

Belongs to the AAE transporter (TC 2.A.81) family. YidE subfamily.

The protein resides in the cell membrane. The chain is Putative transport protein CGSHiEE_03135 from Haemophilus influenzae (strain PittEE).